The chain runs to 102 residues: Small ribosomal subunit protein uS10 (102 aa).

This sequence belongs to the universal ribosomal protein uS10 family. In terms of assembly, part of the 30S ribosomal subunit.

In terms of biological role, involved in the binding of tRNA to the ribosomes. This chain is Small ribosomal subunit protein uS10, found in Chelativorans sp. (strain BNC1).